Consider the following 794-residue polypeptide: uncharacterized protein (794 aa).

The first 22 residues, 1-22, serve as a signal peptide directing secretion; the sequence is MKFKYGAIVFSGLLGVSAILAA. Cysteine 23 carries the N-palmitoyl cysteine lipid modification. Cysteine 23 carries the S-diacylglycerol cysteine lipid modification. 2 stretches are compositionally biased toward polar residues: residues 182-200 and 245-261; these read TSVQRTADSGSGTTNNNGV and QMSTQTQPTDNSNDANQ. Disordered regions lie at residues 182–208, 222–261, 474–529, 566–594, and 737–757; these read TSVQRTADSGSGTTNNNGVTKPLKIDK, NKAKENGKKTSSSRRKRNLSSSKQMSTQTQPTDNSNDANQ, FKIK…GKNG, SAAKKEDKKSGESTTEQTQIQSKSVTEQK, and KNEKKEGSDQKDSKSNGRGKQ. Residues 475–501 show a composition bias toward low complexity; that stretch reads KIKSSNKSKSSSSKSSTKAETGKTSGG. The span at 511-526 shows a compositional bias: polar residues; it reads GAQNQGKKGEGAQNQG. Over residues 567–576 the composition is skewed to basic and acidic residues; it reads AAKKEDKKSG. The span at 577-593 shows a compositional bias: polar residues; that stretch reads ESTTEQTQIQSKSVTEQ. Over residues 737–751 the composition is skewed to basic and acidic residues; it reads KNEKKEGSDQKDSKS.

Belongs to the MG185/MG260 family.

Its subcellular location is the cell membrane. This is an uncharacterized protein from Mycoplasma pneumoniae (strain ATCC 29342 / M129 / Subtype 1) (Mycoplasmoides pneumoniae).